Consider the following 693-residue polypeptide: UvrABC system protein B (693 aa).

The Helicase ATP-binding domain occupies 35 to 188 (ERINNGEKDV…DQLLRQFVGI (154 aa)). 48-55 (GATGTGKS) is an ATP binding site. Positions 101–124 (YYDYYQPEAYVPQTDTFIEKDSSV) match the Beta-hairpin motif. The Helicase C-terminal domain occupies 438–600 (QIDDLLGEIR…VDPTPLRKRI (163 aa)). Residues 612 to 634 (ADTKSLLESAGKGRSRGKAPVPV) are disordered. The 36-residue stretch at 648–683 (VDLIEQLTAQMHSAAGELQFELAARLRDEVGDLKKE) folds into the UVR domain.

It belongs to the UvrB family. Forms a heterotetramer with UvrA during the search for lesions. Interacts with UvrC in an incision complex.

The protein localises to the cytoplasm. In terms of biological role, the UvrABC repair system catalyzes the recognition and processing of DNA lesions. A damage recognition complex composed of 2 UvrA and 2 UvrB subunits scans DNA for abnormalities. Upon binding of the UvrA(2)B(2) complex to a putative damaged site, the DNA wraps around one UvrB monomer. DNA wrap is dependent on ATP binding by UvrB and probably causes local melting of the DNA helix, facilitating insertion of UvrB beta-hairpin between the DNA strands. Then UvrB probes one DNA strand for the presence of a lesion. If a lesion is found the UvrA subunits dissociate and the UvrB-DNA preincision complex is formed. This complex is subsequently bound by UvrC and the second UvrB is released. If no lesion is found, the DNA wraps around the other UvrB subunit that will check the other stand for damage. The polypeptide is UvrABC system protein B (Renibacterium salmoninarum (strain ATCC 33209 / DSM 20767 / JCM 11484 / NBRC 15589 / NCIMB 2235)).